Here is a 368-residue protein sequence, read N- to C-terminus: Putative J domain-containing protein R445 (368 aa).

A J domain is found at D13–L83.

The sequence is that of Putative J domain-containing protein R445 from Acanthamoeba polyphaga mimivirus (APMV).